The primary structure comprises 222 residues: Putative hemin import ATP-binding protein HrtA (222 aa).

The ABC transporter domain occupies Leu-3–Ser-222. Position 39–46 (Gly-39–Thr-46) interacts with ATP.

It belongs to the ABC transporter superfamily. HrtA family. As to quaternary structure, the complex is composed of two ATP-binding proteins (HrtA), two transmembrane proteins (HrtB) and a solute-binding protein.

Its subcellular location is the cell membrane. In terms of biological role, part of the ABC transporter complex hrt involved in hemin import. Responsible for energy coupling to the transport system. The protein is Putative hemin import ATP-binding protein HrtA (hrtA) of Staphylococcus epidermidis (strain ATCC 12228 / FDA PCI 1200).